The primary structure comprises 481 residues: MQAKLTKKEFIEWLKTSEGKQYNADGWYGFQCFDYANAGWKALFGLLLKGVGAKDIPFANNFDGLATVYQNTPDFLAQPGDMVVFGSNYGAGYGHVAWVIEATLDYIIVYEQNWLGGGWTDGVQQPGSGWEKVTRRQHAYDFPMWFIRPNFKSETAPRSVQSPTQASKKETAKPQPKAVELKIIKDVVKGYDLPKRGSNPNFIVIHNDAGSKGATAEAYRNGLVNAPLSRLEAGIAHSYVSGNTVWQALDESQVGWHTANQIGNKYGYGIEVCQSMGADNATFLKNEQATFQECARLLKKWGLPANRNTIRLHNEFTSTSCPHRSSVLHTGFDPVTRGLLPEDKRLQLKDYFIKQIRAYMDGKIPVATVSNDSSASSNTVKPVASAWKRNKYGTYYMEESARFTNGNQPITVRKVGPFLSCPVGYQFQPGGYCDYTEVMLQDGHVWVGYTWEGQRYYLPIRTWNGSAPPNQILGDLWGEIS.

In terms of domain architecture, Peptidase C51 spans 7–148; that stretch reads KKEFIEWLKT…AYDFPMWFIR (142 aa). Cysteine 32 functions as the For endopeptidase activity in the catalytic mechanism. Position 34 (aspartate 34) interacts with Ca(2+). Residues histidine 95 and glutamate 111 each act as for endopeptidase activity in the active site. The segment covering 155 to 166 has biased composition (polar residues); sequence TAPRSVQSPTQA. Residues 155–177 form a disordered region; the sequence is TAPRSVQSPTQASKKETAKPQPK. The N-acetylmuramoyl-L-alanine amidase domain maps to 198 to 323; it reads SNPNFIVIHN…NEFTSTSCPH (126 aa). Zn(2+) is bound by residues histidine 206, histidine 313, and cysteine 321. The SH3b domain maps to 398–466; that stretch reads EESARFTNGN…YLPIRTWNGS (69 aa).

Belongs to the N-acetylmuramoyl-L-alanine amidase 2 family. Zn(2+) is required as a cofactor.

It catalyses the reaction Hydrolyzes the link between N-acetylmuramoyl residues and L-amino acid residues in certain cell-wall glycopeptides.. With respect to regulation, decreased lytic activity with increasing temperature. Functionally, endolysin that degrades host peptidoglycans and participates in the sequential events which lead to the programmed host cell lysis releasing the mature viral particles. Exhibits lytic activity against Staphylococcus aureus isolated from human and bovine samples, as well as Staphylococcus epidermidis isolated from human samples, although with lower lytic activity. No lytic activity detected against several lactic acid bacteria and strains belonging to Bacillus, Streptococcus, Clostridium, Listeria, and Enterococcus. The CHAP activity cleaves the peptidic bond between D-Ala and Gly in the host peptidoglycan. The N-acetyl-muramidase activity cleaves between N-acetylmuramic acid and N-acetylglucosamine bonds. This is Endolysin LysH5 from Staphylococcus aureus (Bacteriophage phiH5).